Here is an 801-residue protein sequence, read N- to C-terminus: Lon protease 2 (801 aa).

The Lon N-terminal domain occupies 14–209 (LPMLPVRDIV…LVNEILAAEL (196 aa)). 361-368 (GPPGVGKT) serves as a coordination point for ATP. The region spanning 597-778 (DSQVGVVQGL…DEVFAVAFDK (182 aa)) is the Lon proteolytic domain. Catalysis depends on residues Ser684 and Lys727. Positions 780-791 (AKGQEKKPAAKK) are enriched in basic and acidic residues. The disordered stretch occupies residues 780–801 (AKGQEKKPAAKKDPKKTKSLAA). Positions 792-801 (DPKKTKSLAA) are enriched in basic residues.

The protein belongs to the peptidase S16 family. Homohexamer. Organized in a ring with a central cavity.

Its subcellular location is the cytoplasm. The catalysed reaction is Hydrolysis of proteins in presence of ATP.. Functionally, ATP-dependent serine protease that mediates the selective degradation of mutant and abnormal proteins as well as certain short-lived regulatory proteins. Required for cellular homeostasis and for survival from DNA damage and developmental changes induced by stress. Degrades polypeptides processively to yield small peptide fragments that are 5 to 10 amino acids long. Binds to DNA in a double-stranded, site-specific manner. The chain is Lon protease 2 from Bdellovibrio bacteriovorus (strain ATCC 15356 / DSM 50701 / NCIMB 9529 / HD100).